We begin with the raw amino-acid sequence, 364 residues long: WAT1-related protein At3g30340 (364 aa).

The next 10 membrane-spanning stretches (helical) occupy residues 9–29, 41–61, 76–96, 102–122, 138–158, 183–203, 215–235, 251–271, 277–297, and 304–324; these read WKAV…NVMF, VATT…AIFL, SLFF…LIGL, TFSL…ALVF, LLGT…KGTA, WAMG…WFIV, YTST…LSLI, VLAL…GMSW, GAVF…IFSF, and IYCG…ILLW. EamA domains follow at residues 26–152 and 195–323; these read NVMF…LVLT and IIWS…YILL.

It belongs to the drug/metabolite transporter (DMT) superfamily. Plant drug/metabolite exporter (P-DME) (TC 2.A.7.4) family.

It localises to the membrane. The chain is WAT1-related protein At3g30340 from Arabidopsis thaliana (Mouse-ear cress).